The primary structure comprises 557 residues: Resveratrol cleavage oxygenase 1 (557 aa).

A disordered region spans residues 1 to 46 (MAILNDPPSSTTILSLHTPDVPPPSKPTPATTSHPQDSRNPRNLTS). Residues tyrosine 144 and lysine 177 each coordinate piceatannol. The trans-resveratrol site is built by tyrosine 144 and lysine 177. Fe cation-binding residues include histidine 211, histidine 262, and histidine 334. Residue glutamate 404 coordinates piceatannol. Residue glutamate 404 participates in trans-resveratrol binding. Position 523 (histidine 523) interacts with Fe cation.

It belongs to the carotenoid oxygenase family. Fe(2+) is required as a cofactor.

The enzyme catalyses trans-resveratrol + O2 = 3,5-dihydroxybenzaldehyde + 4-hydroxybenzaldehyde. The catalysed reaction is piceatannol + O2 = 3,5-dihydroxybenzaldehyde + 3,4-dihydroxybenzaldehyde. In terms of biological role, dioxygenase that cleaves the interphenyl C-alpha-C-beta double bond of resveratrol to yield 3,5-dihydroxybenzaldehyde and 4-hydroxybenzaldehyde. Also cleaves piceatannol, a compound that differs from resveratrol only in the occurrence of an additional hydroxyl group, which leads to the production of 3,4-dihydroxybenzaldehyde and 3,5-hydroxybenzaldehyde. The chain is Resveratrol cleavage oxygenase 1 from Botryotinia fuckeliana (strain B05.10) (Noble rot fungus).